The chain runs to 114 residues: Large ribosomal subunit protein uL22 (114 aa).

The protein belongs to the universal ribosomal protein uL22 family. In terms of assembly, part of the 50S ribosomal subunit.

This protein binds specifically to 23S rRNA; its binding is stimulated by other ribosomal proteins, e.g. L4, L17, and L20. It is important during the early stages of 50S assembly. It makes multiple contacts with different domains of the 23S rRNA in the assembled 50S subunit and ribosome. Its function is as follows. The globular domain of the protein is located near the polypeptide exit tunnel on the outside of the subunit, while an extended beta-hairpin is found that lines the wall of the exit tunnel in the center of the 70S ribosome. This chain is Large ribosomal subunit protein uL22, found in Ehrlichia chaffeensis (strain ATCC CRL-10679 / Arkansas).